The primary structure comprises 225 residues: MPSLLLIEDDDAIRTALELSLTRQGHRVATAASGEDGLKLLREQRPDLIVLDVMLPGIDGFEVCRRIRRTDQLPIILLTARNDDIDVVVGLESGADDYVVKPVQGRVLDARIRAVLRRGERESTDSASFGSLVIDRSAMTVTKNGEDLQLTPTELRLLLELSRRPGQALSRQQLLRLVWEHDYLGDSRLVDACVQRLRAKVEDVPSSPTLIRTVRGVGYRLDPPQ.

The region spanning 3-116 (SLLLIEDDDA…VLDARIRAVL (114 aa)) is the Response regulatory domain. Residue Asp-52 is modified to 4-aspartylphosphate. Residues 124 to 223 (TDSASFGSLV…VRGVGYRLDP (100 aa)) constitute a DNA-binding region (ompR/PhoB-type).

In terms of processing, phosphorylated by AfsQ2.

It is found in the cytoplasm. The protein resides in the nucleoid. In terms of biological role, forms part of a two-component regulatory system AfsQ1/AfsQ2 involved in secondary metabolism. The sequence is that of Transcriptional regulatory protein AfsQ1 from Streptomyces coelicolor (strain ATCC BAA-471 / A3(2) / M145).